A 613-amino-acid chain; its full sequence is Glutathione S-transferase C-terminal domain-containing protein (613 aa).

A GST C-terminal domain is found at 116 to 312; that stretch reads LGFKKTCLKA…QQVPGVRFAA (197 aa).

The protein belongs to the GSTCD family.

Its subcellular location is the cytoplasm. This chain is Glutathione S-transferase C-terminal domain-containing protein (gstcd), found in Xenopus laevis (African clawed frog).